A 179-amino-acid polypeptide reads, in one-letter code: uncharacterized protein (179 aa).

The signal sequence occupies residues 1–19 (MNTNVFRLLLLGSLFSLSA). The N-palmitoyl cysteine moiety is linked to residue C20. C20 carries S-diacylglycerol cysteine lipidation.

The protein resides in the cell membrane. This is an uncharacterized protein from Escherichia coli (strain K12).